A 395-amino-acid polypeptide reads, in one-letter code: L-rhamnonate dehydratase (395 aa).

His-23 and Arg-49 together coordinate substrate. The Mg(2+) site is built by Asp-215, Glu-241, and Glu-269. His-319 acts as the Proton acceptor in catalysis. Substrate is bound at residue Glu-339.

It belongs to the mandelate racemase/muconate lactonizing enzyme family. RhamD subfamily. Homooctamer; tetramer of dimers. Mg(2+) serves as cofactor.

It carries out the reaction L-rhamnonate = 2-dehydro-3-deoxy-L-rhamnonate + H2O. In terms of biological role, catalyzes the dehydration of L-rhamnonate to 2-keto-3-deoxy-L-rhamnonate (KDR). This is L-rhamnonate dehydratase from Delftia acidovorans (strain DSM 14801 / SPH-1).